Here is a 181-residue protein sequence, read N- to C-terminus: TATA-box-binding protein (181 aa).

A run of 2 repeats spans residues 7-83 and 98-173.

It belongs to the TBP family.

Its function is as follows. General factor that plays a role in the activation of archaeal genes transcribed by RNA polymerase. Binds specifically to the TATA box promoter element which lies close to the position of transcription initiation. The sequence is that of TATA-box-binding protein from Methanococcus aeolicus (strain ATCC BAA-1280 / DSM 17508 / OCM 812 / Nankai-3).